The following is a 53-amino-acid chain: Insulin (53 aa).

Residues 1-30 (DVEPLLGFLSPKSGQENEVDDFPYKGQGEL) constitute a propeptide, c peptide. Cysteine 38 and cysteine 43 are joined by a disulfide.

The protein belongs to the insulin family. As to quaternary structure, heterodimer of a B chain and an A chain linked by two disulfide bonds.

It is found in the secreted. Functionally, insulin decreases blood glucose concentration. It increases cell permeability to monosaccharides, amino acids and fatty acids. It accelerates glycolysis, the pentose phosphate cycle, and glycogen synthesis in liver. The chain is Insulin (ins) from Anguilla anguilla (European freshwater eel).